A 215-amino-acid polypeptide reads, in one-letter code: Imidazole glycerol phosphate synthase subunit HisH (215 aa).

The 208-residue stretch at K8–L215 folds into the Glutamine amidotransferase type-1 domain. Catalysis depends on C86, which acts as the Nucleophile. Residues H196 and E198 contribute to the active site.

Heterodimer of HisH and HisF.

It localises to the cytoplasm. It carries out the reaction 5-[(5-phospho-1-deoxy-D-ribulos-1-ylimino)methylamino]-1-(5-phospho-beta-D-ribosyl)imidazole-4-carboxamide + L-glutamine = D-erythro-1-(imidazol-4-yl)glycerol 3-phosphate + 5-amino-1-(5-phospho-beta-D-ribosyl)imidazole-4-carboxamide + L-glutamate + H(+). It catalyses the reaction L-glutamine + H2O = L-glutamate + NH4(+). Its pathway is amino-acid biosynthesis; L-histidine biosynthesis; L-histidine from 5-phospho-alpha-D-ribose 1-diphosphate: step 5/9. IGPS catalyzes the conversion of PRFAR and glutamine to IGP, AICAR and glutamate. The HisH subunit catalyzes the hydrolysis of glutamine to glutamate and ammonia as part of the synthesis of IGP and AICAR. The resulting ammonia molecule is channeled to the active site of HisF. The protein is Imidazole glycerol phosphate synthase subunit HisH of Streptomyces avermitilis (strain ATCC 31267 / DSM 46492 / JCM 5070 / NBRC 14893 / NCIMB 12804 / NRRL 8165 / MA-4680).